The following is a 250-amino-acid chain: Pyridoxine 5'-phosphate synthase (250 aa).

Asn-11 contributes to the 3-amino-2-oxopropyl phosphate binding site. Residue 13–14 coordinates 1-deoxy-D-xylulose 5-phosphate; sequence DH. 3-amino-2-oxopropyl phosphate is bound at residue Arg-22. His-47 (proton acceptor) is an active-site residue. Positions 49 and 54 each coordinate 1-deoxy-D-xylulose 5-phosphate. Residue Glu-74 is the Proton acceptor of the active site. Thr-104 is a 1-deoxy-D-xylulose 5-phosphate binding site. His-198 functions as the Proton donor in the catalytic mechanism. Residues Gly-199 and 220 to 221 each bind 3-amino-2-oxopropyl phosphate; that span reads GY.

It belongs to the PNP synthase family. Homooctamer; tetramer of dimers.

Its subcellular location is the cytoplasm. It catalyses the reaction 3-amino-2-oxopropyl phosphate + 1-deoxy-D-xylulose 5-phosphate = pyridoxine 5'-phosphate + phosphate + 2 H2O + H(+). The protein operates within cofactor biosynthesis; pyridoxine 5'-phosphate biosynthesis; pyridoxine 5'-phosphate from D-erythrose 4-phosphate: step 5/5. In terms of biological role, catalyzes the complicated ring closure reaction between the two acyclic compounds 1-deoxy-D-xylulose-5-phosphate (DXP) and 3-amino-2-oxopropyl phosphate (1-amino-acetone-3-phosphate or AAP) to form pyridoxine 5'-phosphate (PNP) and inorganic phosphate. In Bradyrhizobium diazoefficiens (strain JCM 10833 / BCRC 13528 / IAM 13628 / NBRC 14792 / USDA 110), this protein is Pyridoxine 5'-phosphate synthase.